A 209-amino-acid chain; its full sequence is ATP synthase subunit b 2 (209 aa).

Residues tryptophan 9–phenylalanine 29 traverse the membrane as a helical segment.

The protein belongs to the ATPase B chain family. As to quaternary structure, F-type ATPases have 2 components, F(1) - the catalytic core - and F(0) - the membrane proton channel. F(1) has five subunits: alpha(3), beta(3), gamma(1), delta(1), epsilon(1). F(0) has three main subunits: a(1), b(2) and c(10-14). The alpha and beta chains form an alternating ring which encloses part of the gamma chain. F(1) is attached to F(0) by a central stalk formed by the gamma and epsilon chains, while a peripheral stalk is formed by the delta and b chains.

It localises to the cell inner membrane. Functionally, f(1)F(0) ATP synthase produces ATP from ADP in the presence of a proton or sodium gradient. F-type ATPases consist of two structural domains, F(1) containing the extramembraneous catalytic core and F(0) containing the membrane proton channel, linked together by a central stalk and a peripheral stalk. During catalysis, ATP synthesis in the catalytic domain of F(1) is coupled via a rotary mechanism of the central stalk subunits to proton translocation. Its function is as follows. Component of the F(0) channel, it forms part of the peripheral stalk, linking F(1) to F(0). In Desulfosudis oleivorans (strain DSM 6200 / JCM 39069 / Hxd3) (Desulfococcus oleovorans), this protein is ATP synthase subunit b 2.